The primary structure comprises 212 residues: 2',3'-cyclic-nucleotide 3'-phosphodiesterase (212 aa).

His-51 (proton donor/acceptor) is an active-site residue. Thr-53 contributes to the substrate binding site. His-146 serves as the catalytic Proton donor/acceptor. The substrate site is built by Ser-148 and Tyr-151.

The protein belongs to the 2H phosphoesterase superfamily. CPD1 family.

The protein resides in the golgi apparatus. The enzyme catalyses a nucleoside 2',3'-cyclic phosphate + H2O = a nucleoside 2'-phosphate + H(+). Its function is as follows. Involved in the metabolism of ADP-ribose 1',2'-cyclic phosphate which is produced as a consequence of tRNA splicing. The chain is 2',3'-cyclic-nucleotide 3'-phosphodiesterase (cpd-7) from Neurospora crassa (strain ATCC 24698 / 74-OR23-1A / CBS 708.71 / DSM 1257 / FGSC 987).